Here is a 305-residue protein sequence, read N- to C-terminus: 3-methyl-2-oxobutanoate hydroxymethyltransferase (305 aa).

Residues Asp52 and Asp95 each coordinate Mg(2+). 3-methyl-2-oxobutanoate is bound by residues 52–53, Asp95, and Lys125; that span reads DS. Glu127 contacts Mg(2+). The Proton acceptor role is filled by Glu194.

This sequence belongs to the PanB family. As to quaternary structure, homodecamer; pentamer of dimers. It depends on Mg(2+) as a cofactor.

Its subcellular location is the cytoplasm. The enzyme catalyses 3-methyl-2-oxobutanoate + (6R)-5,10-methylene-5,6,7,8-tetrahydrofolate + H2O = 2-dehydropantoate + (6S)-5,6,7,8-tetrahydrofolate. The protein operates within cofactor biosynthesis; (R)-pantothenate biosynthesis; (R)-pantoate from 3-methyl-2-oxobutanoate: step 1/2. Functionally, catalyzes the reversible reaction in which hydroxymethyl group from 5,10-methylenetetrahydrofolate is transferred onto alpha-ketoisovalerate to form ketopantoate. The sequence is that of 3-methyl-2-oxobutanoate hydroxymethyltransferase from Anaeromyxobacter sp. (strain Fw109-5).